The following is a 107-amino-acid chain: Nucleoid-associated protein PPA0205 (107 aa).

The protein belongs to the YbaB/EbfC family. Homodimer.

It localises to the cytoplasm. It is found in the nucleoid. In terms of biological role, binds to DNA and alters its conformation. May be involved in regulation of gene expression, nucleoid organization and DNA protection. The protein is Nucleoid-associated protein PPA0205 of Cutibacterium acnes (strain DSM 16379 / KPA171202) (Propionibacterium acnes).